The sequence spans 129 residues: Large ribosomal subunit protein bL17 (129 aa).

The protein belongs to the bacterial ribosomal protein bL17 family. As to quaternary structure, part of the 50S ribosomal subunit. Contacts protein L32.

The protein is Large ribosomal subunit protein bL17 of Yersinia enterocolitica serotype O:8 / biotype 1B (strain NCTC 13174 / 8081).